The primary structure comprises 814 residues: G-type lectin S-receptor-like serine/threonine-protein kinase At1g61370 (814 aa).

Residues 1 to 25 (MGKIGIVFFASLLFLLIIFPSCAFA) form the signal peptide. A Bulb-type lectin domain is found at 26-145 (AITRASPLSI…VSERNLWESF (120 aa)). The Extracellular segment spans residues 26-433 (AITRASPLSI…SELAGSNRVK (408 aa)). 6 N-linked (GlcNAc...) asparagine glycosylation sites follow: asparagine 43, asparagine 54, asparagine 89, asparagine 95, asparagine 253, and asparagine 271. One can recognise an EGF-like domain in the interval 282–318 (PVSSCDVYNTCGPFGLCIRSNPPKCECLKGFVPKSDE). Disulfide bonds link cysteine 286–cysteine 298 and cysteine 292–cysteine 306. N-linked (GlcNAc...) asparagine glycans are attached at residues asparagine 324, asparagine 334, asparagine 340, and asparagine 383. A PAN domain is found at 337-423 (CDVNSSATAQ…GETLSIRLAS (87 aa)). 2 cysteine pairs are disulfide-bonded: cysteine 376-cysteine 397 and cysteine 380-cysteine 386. Residues 434–454 (IIVASIVSISVFMILVFASYW) form a helical membrane-spanning segment. The Cytoplasmic segment spans residues 455-814 (YWRYKAKQND…NITQTAIVGR (360 aa)). Residues 501-786 (FSMENKLGQG…DLPKPKQPVF (286 aa)) form the Protein kinase domain. ATP contacts are provided by residues 507–515 (LGQGGFGPV) and lysine 529. A phosphoserine mark is found at serine 535 and serine 550. A caM-binding region spans residues 590-607 (TKKLELDWPKRFEIIQGI). Aspartate 626 acts as the Proton acceptor in catalysis. Phosphoserine is present on residues serine 630 and serine 643. A Phosphothreonine modification is found at threonine 660. A phosphoserine mark is found at serine 703, serine 704, serine 797, and serine 802. Threonine 809 is modified (phosphothreonine).

Belongs to the protein kinase superfamily. Ser/Thr protein kinase family.

It localises to the cell membrane. The catalysed reaction is L-seryl-[protein] + ATP = O-phospho-L-seryl-[protein] + ADP + H(+). It catalyses the reaction L-threonyl-[protein] + ATP = O-phospho-L-threonyl-[protein] + ADP + H(+). The sequence is that of G-type lectin S-receptor-like serine/threonine-protein kinase At1g61370 from Arabidopsis thaliana (Mouse-ear cress).